We begin with the raw amino-acid sequence, 161 residues long: Large ribosomal subunit protein uL15 (161 aa).

Residues 1–43 (MKLSEIADNVGSRKKRMRIGRGIGSGKGKTGGRGGKGQTARSG) are disordered. Gly residues predominate over residues 21-37 (RGIGSGKGKTGGRGGKG).

As to quaternary structure, part of the 50S ribosomal subunit.

In terms of biological role, binds to the 23S rRNA. The polypeptide is Large ribosomal subunit protein uL15 (Rhodopseudomonas palustris (strain ATCC BAA-98 / CGA009)).